The following is a 203-amino-acid chain: MAKAIAKALLEIEAVSLSPNDPFTWSSGIKSPIYCDNRVTLGYPEVRQHIRDGLCDLIETYFGDVEIVSGTATAGIPHAAYVSEKLALPMNYVRSKSKSHGKQNQIEGALSKGKKVVVIEDLISTGGSSITAVEALREAGADVIGVVAIFTYGLKKADEQFKQAQMPLYTLSNYNELIDVAKENGEISDNDIRSLVDWRDNLS.

Residues arginine 94, lysine 98, histidine 100, and 120–128 (EDLISTGGS) each bind 5-phospho-alpha-D-ribose 1-diphosphate. An orotate-binding site is contributed by serine 124.

It belongs to the purine/pyrimidine phosphoribosyltransferase family. PyrE subfamily. In terms of assembly, homodimer. It depends on Mg(2+) as a cofactor.

It carries out the reaction orotidine 5'-phosphate + diphosphate = orotate + 5-phospho-alpha-D-ribose 1-diphosphate. It functions in the pathway pyrimidine metabolism; UMP biosynthesis via de novo pathway; UMP from orotate: step 1/2. Its function is as follows. Catalyzes the transfer of a ribosyl phosphate group from 5-phosphoribose 1-diphosphate to orotate, leading to the formation of orotidine monophosphate (OMP). In Staphylococcus saprophyticus subsp. saprophyticus (strain ATCC 15305 / DSM 20229 / NCIMB 8711 / NCTC 7292 / S-41), this protein is Orotate phosphoribosyltransferase.